A 733-amino-acid polypeptide reads, in one-letter code: Neutral ceramidase 3 (733 aa).

An N-terminal signal peptide occupies residues 1–25 (MTRWSMSMHCTLFLLFLLRLTCIFS). The active-site Nucleophile is the S307. N-linked (GlcNAc...) asparagine glycosylation occurs at N325.

The protein belongs to the neutral ceramidase family.

Its subcellular location is the secreted. It localises to the endoplasmic reticulum. The protein resides in the golgi apparatus. It carries out the reaction an N-acylsphing-4-enine + H2O = sphing-4-enine + a fatty acid. In terms of biological role, hydrolyzes the sphingolipid ceramide into sphingosine and free fatty acid. Promotes oxidative stress resistance. This chain is Neutral ceramidase 3, found in Arabidopsis thaliana (Mouse-ear cress).